Reading from the N-terminus, the 432-residue chain is Adenylosuccinate synthetase (432 aa).

GTP is bound by residues 12–18 (GDEGKGK) and 40–42 (GHT). Asp13 functions as the Proton acceptor in the catalytic mechanism. 2 residues coordinate Mg(2+): Asp13 and Gly40. IMP-binding positions include 13-16 (DEGK), 38-41 (NAGH), Thr132, Arg146, Gln226, Thr241, and Arg305. His41 (proton donor) is an active-site residue. 301–307 (VVTGRKR) contacts substrate. GTP is bound by residues Arg307, 333 to 335 (KLD), and 415 to 417 (STS).

This sequence belongs to the adenylosuccinate synthetase family. In terms of assembly, homodimer. Mg(2+) serves as cofactor.

It localises to the cytoplasm. The catalysed reaction is IMP + L-aspartate + GTP = N(6)-(1,2-dicarboxyethyl)-AMP + GDP + phosphate + 2 H(+). Its pathway is purine metabolism; AMP biosynthesis via de novo pathway; AMP from IMP: step 1/2. Functionally, plays an important role in the de novo pathway of purine nucleotide biosynthesis. Catalyzes the first committed step in the biosynthesis of AMP from IMP. The polypeptide is Adenylosuccinate synthetase (Rhizobium etli (strain CIAT 652)).